The sequence spans 245 residues: tRNA pseudouridine synthase A 2 (245 aa).

The Nucleophile role is filled by Asp-53. Tyr-111 contributes to the substrate binding site.

This sequence belongs to the tRNA pseudouridine synthase TruA family. As to quaternary structure, homodimer.

The catalysed reaction is uridine(38/39/40) in tRNA = pseudouridine(38/39/40) in tRNA. Formation of pseudouridine at positions 38, 39 and 40 in the anticodon stem and loop of transfer RNAs. The polypeptide is tRNA pseudouridine synthase A 2 (Bacillus cereus (strain ATCC 10987 / NRS 248)).